A 195-amino-acid chain; its full sequence is Protein GrpE (195 aa).

The protein belongs to the GrpE family. Homodimer.

It localises to the cytoplasm. Functionally, participates actively in the response to hyperosmotic and heat shock by preventing the aggregation of stress-denatured proteins, in association with DnaK and GrpE. It is the nucleotide exchange factor for DnaK and may function as a thermosensor. Unfolded proteins bind initially to DnaJ; upon interaction with the DnaJ-bound protein, DnaK hydrolyzes its bound ATP, resulting in the formation of a stable complex. GrpE releases ADP from DnaK; ATP binding to DnaK triggers the release of the substrate protein, thus completing the reaction cycle. Several rounds of ATP-dependent interactions between DnaJ, DnaK and GrpE are required for fully efficient folding. The chain is Protein GrpE from Francisella tularensis subsp. holarctica (strain FTNF002-00 / FTA).